A 312-amino-acid polypeptide reads, in one-letter code: Small kinetochore-associated protein (312 aa).

A compositionally biased stretch (basic and acidic residues) spans methionine 1–phenylalanine 13. Disordered regions lie at residues methionine 1 to arginine 32, leucine 55 to asparagine 176, and lysine 221 to aspartate 242. Residues arginine 75–threonine 84 show a composition bias toward polar residues. Composition is skewed to basic and acidic residues over residues aspartate 131–glycine 143 and glutamine 166–asparagine 176. The segment at isoleucine 156 to methionine 312 is interaction with SPAG5. The stretch at glutamate 169 to phenylalanine 210 forms a coiled coil. Residues leucine 246–glutamine 288 are a coiled coil.

As to quaternary structure, part of an astrin (SPAG5)-kinastrin (SKAP) complex containing KNSTRN, SPAG5, PLK1, DYNLL1 and SGO2. Interacts with SPAG5. Directly binds to microtubules, although at relatively low affinity. Interacts with CENPE; this interaction greatly favors microtubule-binding. Interacts with DSN1/MIS13; leading to localization to kinetochores. Interacts with MAPRE1/EB1; leading to localization to the microtubule plus ends. Interacts with PRPF19. Interacts with DYNLL1. Interacts with MAP4.

The protein resides in the nucleus. The protein localises to the chromosome. It is found in the centromere. It localises to the kinetochore. Its subcellular location is the cytoplasm. The protein resides in the cytoskeleton. The protein localises to the spindle pole. It is found in the microtubule organizing center. In terms of biological role, essential component of the mitotic spindle required for faithful chromosome segregation and progression into anaphase. Promotes the metaphase-to-anaphase transition and is required for chromosome alignment, normal timing of sister chromatid segregation, and maintenance of spindle pole architecture. The astrin (SPAG5)-kinastrin (SKAP) complex promotes stable microtubule-kinetochore attachments. Required for kinetochore oscillations and dynamics of microtubule plus-ends during live cell mitosis, possibly by forming a link between spindle microtubule plus-ends and mitotic chromosomes to achieve faithful cell division. The protein is Small kinetochore-associated protein (Knstrn) of Rattus norvegicus (Rat).